Reading from the N-terminus, the 147-residue chain is Ribosome maturation factor RimP (147 aa).

Belongs to the RimP family.

Its subcellular location is the cytoplasm. Required for maturation of 30S ribosomal subunits. This is Ribosome maturation factor RimP from Sulfurihydrogenibium azorense (strain DSM 15241 / OCM 825 / Az-Fu1).